The chain runs to 320 residues: Mitochondrial glycine transporter (320 aa).

Solcar repeat units lie at residues 8 to 92 (SKTT…LRQG), 121 to 205 (LSNW…LKRR), and 223 to 307 (SSSS…LILR). 6 helical membrane passes run 14 to 39 (FAAG…TRVQ), 67 to 93 (GTLP…RQGL), 127 to 152 (LATG…VRYE), 180 to 203 (GFGA…EQLK), 227 to 253 (INFV…KTRL), and 282 to 300 (GLGL…AWTV).

It belongs to the mitochondrial carrier (TC 2.A.29) family. SLC25A38 subfamily.

The protein resides in the mitochondrion inner membrane. It catalyses the reaction glycine(in) = glycine(out). Functionally, mitochondrial glycine transporter that imports glycine into the mitochondrial matrix. Plays an important role in providing glycine for the first enzymatic step in heme biosynthesis, the condensation of glycine with succinyl-CoA to produce 5-aminolevulinate (ALA) in the mitochondrial matrix. This Aspergillus fumigatus (strain CBS 144.89 / FGSC A1163 / CEA10) (Neosartorya fumigata) protein is Mitochondrial glycine transporter.